A 108-amino-acid polypeptide reads, in one-letter code: MKFVVWPSEIDSRLPRKYGRLVKKEVALEAPTPEEIRDAAEILGMKVIEFEPEKLNPRLSGIDEELRTKGMLRIESPYPKGKSLRMICEKIRELRAKKRKAHGKRKKR.

It belongs to the SRP19 family. Part of the signal recognition particle protein translocation system, which is composed of SRP and FtsY. Archaeal SRP consists of a 7S RNA molecule of 300 nucleotides and two protein subunits: SRP54 and SRP19.

Its subcellular location is the cytoplasm. Involved in targeting and insertion of nascent membrane proteins into the cytoplasmic membrane. Binds directly to 7S RNA and mediates binding of the 54 kDa subunit of the SRP. This chain is Signal recognition particle 19 kDa protein, found in Thermococcus kodakarensis (strain ATCC BAA-918 / JCM 12380 / KOD1) (Pyrococcus kodakaraensis (strain KOD1)).